The chain runs to 304 residues: Dermonecrotic toxin LiSicTox-betaIA1ii (304 aa).

An N-terminal signal peptide occupies residues 1-21 (MLLCAVISFIVYAVFLQEANG). Positions 22 to 26 (HAAER) are excised as a propeptide. The active site involves His38. Positions 58 and 60 each coordinate Mg(2+). The active-site Nucleophile is His74. Disulfide bonds link Cys78-Cys84 and Cys80-Cys223. Asp118 serves as a coordination point for Mg(2+).

It belongs to the arthropod phospholipase D family. Class II subfamily. Mg(2+) serves as cofactor. In terms of tissue distribution, expressed by the venom gland.

It is found in the secreted. It catalyses the reaction an N-(acyl)-sphingosylphosphocholine = an N-(acyl)-sphingosyl-1,3-cyclic phosphate + choline. It carries out the reaction an N-(acyl)-sphingosylphosphoethanolamine = an N-(acyl)-sphingosyl-1,3-cyclic phosphate + ethanolamine. The enzyme catalyses a 1-acyl-sn-glycero-3-phosphocholine = a 1-acyl-sn-glycero-2,3-cyclic phosphate + choline. The catalysed reaction is a 1-acyl-sn-glycero-3-phosphoethanolamine = a 1-acyl-sn-glycero-2,3-cyclic phosphate + ethanolamine. Functionally, dermonecrotic toxins cleave the phosphodiester linkage between the phosphate and headgroup of certain phospholipids (sphingolipid and lysolipid substrates), forming an alcohol (often choline) and a cyclic phosphate. This toxin acts on sphingomyelin (SM) with low activity. It may also act on ceramide phosphoethanolamine (CPE), lysophosphatidylcholine (LPC) and lysophosphatidylethanolamine (LPE), but not on lysophosphatidylserine (LPS), and lysophosphatidylglycerol (LPG). It acts by transphosphatidylation, releasing exclusively cyclic phosphate products as second products. Induces dermonecrosis, hemolysis, increased vascular permeability, edema, inflammatory response, and platelet aggregation. The protein is Dermonecrotic toxin LiSicTox-betaIA1ii of Loxosceles intermedia (Brown spider).